Reading from the N-terminus, the 104-residue chain is Large ribosomal subunit protein bL21 (104 aa).

This sequence belongs to the bacterial ribosomal protein bL21 family. Part of the 50S ribosomal subunit. Contacts protein L20.

Functionally, this protein binds to 23S rRNA in the presence of protein L20. This Streptococcus pyogenes serotype M1 protein is Large ribosomal subunit protein bL21.